The primary structure comprises 418 residues: Endoglucanase EG-II (418 aa).

The N-terminal stretch at 1 to 21 (MNKSVAPLLLAASILYGGAVA) is a signal peptide. At Gln-22 the chain carries Pyrrolidone carboxylic acid. Residues 22-57 (QQTVWGQCGGIGWSGPTNCAPGSACSTLNPYYAQCI) form the CBM1 domain. The tract at residues 58 to 91 (PGATTITTSTRPPSGPTTTTRATSTSSSTPPTSS) is linker. Positions 63–91 (ITTSTRPPSGPTTTTRATSTSSSTPPTSS) are disordered. Positions 92-418 (GVRFAGVNIA…SLVSSCLARK (327 aa)) are catalytic. The cysteines at positions 107 and 113 are disulfide-linked. N-linked (GlcNAc) asparagine glycosylation is present at Asn-124. Cys-183 and Cys-190 are disulfide-bonded. The active-site Proton donor/acceptor is Glu-239. Disulfide bonds link Cys-323-Cys-359 and Cys-364-Cys-414. Glu-350 acts as the Nucleophile in catalysis.

This sequence belongs to the glycosyl hydrolase 5 (cellulase A) family.

The protein resides in the secreted. It catalyses the reaction Endohydrolysis of (1-&gt;4)-beta-D-glucosidic linkages in cellulose, lichenin and cereal beta-D-glucans.. Endoglucanase (EG) that cleaves the internal beta-1,4-glucosidic bonds in cellulose. The degradation of cellulose involves an interplay between different cellulolytic enzymes. Hydrolysis starts with EGs, which cut internal glycosidic linkages to reduce the polymerization degree of the substrate and creates new chain ends for exocellobiohydrolases (CBHs). The CBH release the disaccharide cellobiose from the non-reducing end of the cellulose polymer chain. Finally, beta-1,4-glucosidases hydrolyze the cellobiose and other short cello-oligosaccharides into glucose units. The protein is Endoglucanase EG-II (egl2) of Hypocrea jecorina (Trichoderma reesei).